Consider the following 253-residue polypeptide: 3-deoxy-manno-octulosonate cytidylyltransferase (253 aa).

Belongs to the KdsB family.

Its subcellular location is the cytoplasm. It catalyses the reaction 3-deoxy-alpha-D-manno-oct-2-ulosonate + CTP = CMP-3-deoxy-beta-D-manno-octulosonate + diphosphate. Its pathway is nucleotide-sugar biosynthesis; CMP-3-deoxy-D-manno-octulosonate biosynthesis; CMP-3-deoxy-D-manno-octulosonate from 3-deoxy-D-manno-octulosonate and CTP: step 1/1. It functions in the pathway bacterial outer membrane biogenesis; lipopolysaccharide biosynthesis. Its function is as follows. Activates KDO (a required 8-carbon sugar) for incorporation into bacterial lipopolysaccharide in Gram-negative bacteria. The chain is 3-deoxy-manno-octulosonate cytidylyltransferase from Geotalea daltonii (strain DSM 22248 / JCM 15807 / FRC-32) (Geobacter daltonii).